Here is a 366-residue protein sequence, read N- to C-terminus: Probable quinol oxidase subunit 2 (366 aa).

Positions 1-19 (MSKFKSLLLLFGTLILLSG) are cleaved as a signal peptide. The N-palmitoyl cysteine moiety is linked to residue C20. C20 is lipidated: S-diacylglycerol cysteine. 2 helical membrane passes run 38-58 (FLIL…LGMF) and 80-100 (AIIE…LAIP). The disordered stretch occupies residues 330–366 (EPYNNEFKKDESKNAKEMKKISKDAQDQDNDDHGGGH). Residues 335–366 (EFKKDESKNAKEMKKISKDAQDQDNDDHGGGH) are compositionally biased toward basic and acidic residues.

It belongs to the cytochrome c oxidase subunit 2 family.

It is found in the cell membrane. The enzyme catalyses 2 a quinol + O2 = 2 a quinone + 2 H2O. Functionally, catalyzes quinol oxidation with the concomitant reduction of oxygen to water. Subunit II transfers the electrons from a quinol to the binuclear center of the catalytic subunit I. The protein is Probable quinol oxidase subunit 2 (qoxA) of Staphylococcus aureus (strain USA300).